Consider the following 224-residue polypeptide: Uracil-DNA glycosylase (224 aa).

Asp-65 acts as the Proton acceptor in catalysis.

Belongs to the uracil-DNA glycosylase (UDG) superfamily. UNG family.

Its subcellular location is the cytoplasm. The enzyme catalyses Hydrolyzes single-stranded DNA or mismatched double-stranded DNA and polynucleotides, releasing free uracil.. Its function is as follows. Excises uracil residues from the DNA which can arise as a result of misincorporation of dUMP residues by DNA polymerase or due to deamination of cytosine. In Buchnera aphidicola subsp. Baizongia pistaciae (strain Bp), this protein is Uracil-DNA glycosylase.